A 457-amino-acid chain; its full sequence is Dynein regulatory complex protein 10 (457 aa).

Coiled coils occupy residues 101-127 (EKAS…DQER), 209-258 (IQDI…LHQV), and 292-381 (QQDI…AESE). In terms of domain architecture, IQ spans 397 to 426 (MVRAATLIQAMWKGYLVRSMLRSRKKKRVK). Residues 419–457 (SRKKKRVKSKGKDKGKGKEKPKEEKGKEKKAKGKGKGKK) are disordered. Basic and acidic residues predominate over residues 428 to 445 (KGKDKGKGKEKPKEEKGK). Residues 446-457 (EKKAKGKGKGKK) show a composition bias toward basic residues.

The protein belongs to the DRC10 family. As to quaternary structure, component of the nexin-dynein regulatory complex (N-DRC). Interacts with CFAP52.

Its subcellular location is the cytoplasm. It is found in the cytoskeleton. The protein localises to the flagellum axoneme. Component of the nexin-dynein regulatory complex (N-DRC), a key regulator of ciliary/flagellar motility which maintains the alignment and integrity of the distal axoneme and regulates microtubule sliding in motile axonemes. The protein is Dynein regulatory complex protein 10 (Iqcd) of Rattus norvegicus (Rat).